The sequence spans 138 residues: Large ribosomal subunit protein uL16 (138 aa).

The segment covering Met-1–Gln-13 has biased composition (basic residues). A disordered region spans residues Met-1–Ile-20.

Belongs to the universal ribosomal protein uL16 family. In terms of assembly, part of the 50S ribosomal subunit.

Its function is as follows. Binds 23S rRNA and is also seen to make contacts with the A and possibly P site tRNAs. This Paraburkholderia phytofirmans (strain DSM 17436 / LMG 22146 / PsJN) (Burkholderia phytofirmans) protein is Large ribosomal subunit protein uL16.